The primary structure comprises 492 residues: Probable cytochrome P450 310a1 (492 aa).

C428 contacts heme.

It belongs to the cytochrome P450 family. Heme is required as a cofactor.

It is found in the endoplasmic reticulum membrane. The protein localises to the microsome membrane. In terms of biological role, may be involved in the metabolism of insect hormones and in the breakdown of synthetic insecticides. The protein is Probable cytochrome P450 310a1 (Cyp310a1) of Drosophila melanogaster (Fruit fly).